The following is a 142-amino-acid chain: Large ribosomal subunit protein uL11 (142 aa).

This sequence belongs to the universal ribosomal protein uL11 family. As to quaternary structure, part of the ribosomal stalk of the 50S ribosomal subunit. Interacts with L10 and the large rRNA to form the base of the stalk. L10 forms an elongated spine to which L12 dimers bind in a sequential fashion forming a multimeric L10(L12)X complex. One or more lysine residues are methylated.

Functionally, forms part of the ribosomal stalk which helps the ribosome interact with GTP-bound translation factors. This is Large ribosomal subunit protein uL11 from Shewanella amazonensis (strain ATCC BAA-1098 / SB2B).